Reading from the N-terminus, the 366-residue chain is N-acetyl-L-citrulline deacetylase (366 aa).

Histidine 72 and aspartate 103 together coordinate Co(2+). Glutamate 130 functions as the Proton donor/acceptor in the catalytic mechanism. Glutamate 155 is a binding site for Co(2+).

This sequence belongs to the peptidase M20A family. N-acetylcitrulline deacetylase subfamily. As to quaternary structure, forms homodimers in the crystal, but higher order oligomers may form in solution. Co(2+) is required as a cofactor.

The catalysed reaction is N(2)-acetyl-L-citrulline + H2O = L-citrulline + acetate. It carries out the reaction N(2)-acetyl-L-ornithine + H2O = L-ornithine + acetate. The protein operates within amino-acid biosynthesis; L-arginine biosynthesis. Catalyzes the deacetylation of N-acetyl-L-citrulline to produce L-citrulline. This is a step in an alternative arginine biosynthesis pathway. Is also able to catalyze the deacetylation of N-acetylornithine in vitro, with almost equal velocity. However, this reaction may be not relevant in vivo since Xanthomonas does not possess the canonical argF gene and cannot convert ornithine to citrulline via ArgF'. The sequence is that of N-acetyl-L-citrulline deacetylase from Xanthomonas campestris pv. campestris (strain ATCC 33913 / DSM 3586 / NCPPB 528 / LMG 568 / P 25).